A 117-amino-acid polypeptide reads, in one-letter code: NADH-ubiquinone oxidoreductase chain 3 (117 aa).

3 helical membrane passes run phenylalanine 4–leucine 24, leucine 61–leucine 81, and isoleucine 86–isoleucine 106.

This sequence belongs to the complex I subunit 3 family.

The protein resides in the mitochondrion membrane. It carries out the reaction a ubiquinone + NADH + 5 H(+)(in) = a ubiquinol + NAD(+) + 4 H(+)(out). Functionally, core subunit of the mitochondrial membrane respiratory chain NADH dehydrogenase (Complex I) that is believed to belong to the minimal assembly required for catalysis. Complex I functions in the transfer of electrons from NADH to the respiratory chain. The immediate electron acceptor for the enzyme is believed to be ubiquinone. This chain is NADH-ubiquinone oxidoreductase chain 3 (NAD3), found in Prototheca wickerhamii.